The sequence spans 200 residues: UPF0316 protein Mhun_0543 (200 aa).

The next 3 membrane-spanning stretches (helical) occupy residues 3–23, 44–64, and 71–91; these read VGFLSSDLFTFGLIPVLIFLA, FIAPVFGFFEVTIWLLAIGQV, and PICYIAYGAGFAAGTYIGMEL.

This sequence belongs to the UPF0316 family.

The protein localises to the cell membrane. The chain is UPF0316 protein Mhun_0543 from Methanospirillum hungatei JF-1 (strain ATCC 27890 / DSM 864 / NBRC 100397 / JF-1).